A 478-amino-acid chain; its full sequence is Cysteine--tRNA ligase (478 aa).

Zn(2+) is bound at residue C29. Residues 31-41 carry the 'HIGH' region motif; it reads ATVQSIPHIGH. Residues C207, H232, and E236 each coordinate Zn(2+). Positions 263–267 match the 'KMSKS' region motif; it reads KMSKS. K266 is an ATP binding site.

This sequence belongs to the class-I aminoacyl-tRNA synthetase family. Monomer. Zn(2+) serves as cofactor.

Its subcellular location is the cytoplasm. It carries out the reaction tRNA(Cys) + L-cysteine + ATP = L-cysteinyl-tRNA(Cys) + AMP + diphosphate. The chain is Cysteine--tRNA ligase from Corynebacterium jeikeium (strain K411).